Reading from the N-terminus, the 86-residue chain is Photosystem I reaction center subunit PsaK (86 aa).

Residues 15–34 form a helical membrane-spanning segment; that stretch reads PWSTQVAMVMITCNLLAIVA.

The protein belongs to the PsaG/PsaK family.

The protein resides in the plastid. It localises to the chloroplast thylakoid membrane. The sequence is that of Photosystem I reaction center subunit PsaK from Pyropia yezoensis (Susabi-nori).